The sequence spans 697 residues: Elongation factor G (697 aa).

One can recognise a tr-type G domain in the interval 8–283 (EHIRNIGICA…AVVDFLPSPT (276 aa)). Residues 17–24 (AHIDAGKT), 81–85 (DTPGH), and 135–138 (NKMD) contribute to the GTP site.

Belongs to the TRAFAC class translation factor GTPase superfamily. Classic translation factor GTPase family. EF-G/EF-2 subfamily.

The protein localises to the cytoplasm. Catalyzes the GTP-dependent ribosomal translocation step during translation elongation. During this step, the ribosome changes from the pre-translocational (PRE) to the post-translocational (POST) state as the newly formed A-site-bound peptidyl-tRNA and P-site-bound deacylated tRNA move to the P and E sites, respectively. Catalyzes the coordinated movement of the two tRNA molecules, the mRNA and conformational changes in the ribosome. The chain is Elongation factor G from Rickettsia rhipicephali.